Reading from the N-terminus, the 93-residue chain is Small ribosomal subunit protein uS15 (93 aa).

This sequence belongs to the universal ribosomal protein uS15 family. In terms of assembly, part of the 30S ribosomal subunit. Forms a bridge to the 50S subunit in the 70S ribosome, contacting the 23S rRNA.

One of the primary rRNA binding proteins, it binds directly to 16S rRNA where it helps nucleate assembly of the platform of the 30S subunit by binding and bridging several RNA helices of the 16S rRNA. Functionally, forms an intersubunit bridge (bridge B4) with the 23S rRNA of the 50S subunit in the ribosome. This chain is Small ribosomal subunit protein uS15, found in Ehrlichia canis (strain Jake).